Here is a 189-residue protein sequence, read N- to C-terminus: Proline-rich protein 29 (189 aa).

The disordered stretch occupies residues 152 to 189; it reads SREREVRAVPPPPPPSATGTVGADVPPASDYYDAESLL.

The chain is Proline-rich protein 29 (PRR29) from Homo sapiens (Human).